A 153-amino-acid chain; its full sequence is Urease accessory protein UreE (153 aa).

It belongs to the UreE family.

Its subcellular location is the cytoplasm. In terms of biological role, involved in urease metallocenter assembly. Binds nickel. Probably functions as a nickel donor during metallocenter assembly. In Acetivibrio thermocellus (strain ATCC 27405 / DSM 1237 / JCM 9322 / NBRC 103400 / NCIMB 10682 / NRRL B-4536 / VPI 7372) (Clostridium thermocellum), this protein is Urease accessory protein UreE.